We begin with the raw amino-acid sequence, 670 residues long: Thrombospondin-type laminin G domain and EAR repeat-containing protein (670 aa).

A signal peptide spans 1–20 (MSALLMLCAVLLLLGTPSRG). In terms of domain architecture, Laminin G-like spans 59–278 (GLQFSATEPR…KVTLGSRPPC (220 aa)). 7 EAR repeats span residues 314–359 (DYVE…KWTD), 361–409 (KFVS…KWSP), 413–461 (KFTL…RWNP), 465–513 (LFEA…IWLV), 515–571 (AFQL…ELNI), 575–623 (TFVK…RWQG), and 626–669 (GFVA…KLRT). N-linked (GlcNAc...) asparagine glycosylation occurs at Asn-498.

In the organ of Corti, expression at postnatal day 1 (P1) is restricted to the basal region of the stereocilia of inner and outer hair cells (at protein level). Expressed in the organ of Corti at P1 and P7, in cochlear ganglion, stria vascularis and vestibular ends at P7, and in inferior colliculus, remaining brainstem, cerebellum, brain hemispheres and retina at P1, P7 and in the adult. Also detected in adult liver, lung, kidney, intestine and testis but not in heart or skeletal muscle.

The protein resides in the secreted. It localises to the cell surface. Its subcellular location is the cell projection. The protein localises to the stereocilium. Its function is as follows. Plays a critical role in tooth and hair follicle morphogenesis through regulation of the Notch signaling pathway. May play a role in development or function of the auditory system. The polypeptide is Thrombospondin-type laminin G domain and EAR repeat-containing protein (Mus musculus (Mouse)).